Here is a 678-residue protein sequence, read N- to C-terminus: ERAD-associated E3 ubiquitin-protein ligase component HRD3A (678 aa).

The signal sequence occupies residues M1–A25. The disordered stretch occupies residues G40–W71. Sel1-like repeat units lie at residues P124–N159, A242–G277, P279–G313, A317–N349, S353–G386, P388–G422, A506–Q537, and A540–D568. N-linked (GlcNAc...) asparagine glycans are attached at residues N298 and N335. Residues V620 to L640 traverse the membrane as a helical segment.

The protein belongs to the sel-1 family. As to quaternary structure, interacts with OS9.

It localises to the endoplasmic reticulum membrane. Its function is as follows. Component of the endoplasmic reticulum (ER) quality control system called ER-associated degradation (ERAD) and involved in ubiquitin-dependent degradation of misfolded endoplasmic reticulum proteins. Functions as an ERAD substrate-recruiting factor that recognizes misfolded proteins for the HRD1 E3 ubiquitin ligase complex. Targets the misfolded LRR receptor kinase BRI1. The protein is ERAD-associated E3 ubiquitin-protein ligase component HRD3A of Arabidopsis thaliana (Mouse-ear cress).